We begin with the raw amino-acid sequence, 221 residues long: Chalcone--flavanone isomerase (221 aa).

The substrate site is built by T50, N115, and T192.

This sequence belongs to the chalcone isomerase family.

The enzyme catalyses a chalcone = a flavanone.. Its pathway is secondary metabolite biosynthesis; flavonoid biosynthesis. Its function is as follows. Catalyzes the intramolecular cyclization of bicyclic chalcones into tricyclic (S)-flavanones. Responsible for the isomerization of 4,2',4',6'-tetrahydroxychalcone (also termed chalcone) into naringenin. The sequence is that of Chalcone--flavanone isomerase (CHI) from Phaseolus vulgaris (Kidney bean).